Reading from the N-terminus, the 745-residue chain is Jacalin-related lectin 4 (745 aa).

5 Jacalin-type lectin domains span residues 2–148 (AQKL…YFAP), 151–294 (PTKF…YFSP), 307–448 (AEKL…YFVT), 451–594 (PTKF…YFSR), and 601–744 (AETL…YVMP).

The protein belongs to the jacalin lectin family.

The sequence is that of Jacalin-related lectin 4 (JAL4) from Arabidopsis thaliana (Mouse-ear cress).